A 239-amino-acid chain; its full sequence is ATP-dependent dethiobiotin synthetase BioD (239 aa).

15–20 (EIGKTF) provides a ligand contact to ATP. Residue Thr-19 coordinates Mg(2+). The active site involves Lys-40. Residues Asp-57, 118–121 (EGVG), and 178–179 (NH) contribute to the ATP site. Mg(2+)-binding residues include Asp-57 and Glu-118.

The protein belongs to the dethiobiotin synthetase family. As to quaternary structure, homodimer. It depends on Mg(2+) as a cofactor.

It localises to the cytoplasm. It carries out the reaction (7R,8S)-7,8-diammoniononanoate + CO2 + ATP = (4R,5S)-dethiobiotin + ADP + phosphate + 3 H(+). The protein operates within cofactor biosynthesis; biotin biosynthesis; biotin from 7,8-diaminononanoate: step 1/2. Its function is as follows. Catalyzes a mechanistically unusual reaction, the ATP-dependent insertion of CO2 between the N7 and N8 nitrogen atoms of 7,8-diaminopelargonic acid (DAPA, also called 7,8-diammoniononanoate) to form a ureido ring. In Burkholderia ambifaria (strain ATCC BAA-244 / DSM 16087 / CCUG 44356 / LMG 19182 / AMMD) (Burkholderia cepacia (strain AMMD)), this protein is ATP-dependent dethiobiotin synthetase BioD.